Reading from the N-terminus, the 446-residue chain is Glutamine synthetase (446 aa).

Residues 18-103 (ENVRYLRLQF…LICDVFKTDG (86 aa)) form the GS beta-grasp domain. A GS catalytic domain is found at 110-446 (PRANLKRVLR…WEREQYIKQY (337 aa)). 2 residues coordinate Mg(2+): Glu134 and Glu136. Glu186 is an ATP binding site. Positions 191 and 198 each coordinate Mg(2+). L-glutamate is bound by residues 242–243 (NG) and Gly243. Residue His247 participates in Mg(2+) binding. Residue Ser251 participates in ATP binding. Residues Arg300, Glu306, and Arg318 each coordinate L-glutamate. ATP contacts are provided by Arg318 and Arg323. Glu335 lines the Mg(2+) pocket. Arg337 lines the L-glutamate pocket.

It belongs to the glutamine synthetase family. Oligomer of 12 subunits arranged in the form of two hexagons. In its feedback-inhibited form, interacts with TnrA in order to block its DNA-binding activity. It depends on Mg(2+) as a cofactor.

It localises to the cytoplasm. The catalysed reaction is L-glutamate + NH4(+) + ATP = L-glutamine + ADP + phosphate + H(+). With respect to regulation, inhibited by glutamine. Its function is as follows. Glutamine synthetase (GS) is an unusual multitasking protein that functions as an enzyme, a transcription coregulator, and a chaperone in ammonium assimilation and in the regulation of genes involved in nitrogen metabolism. It catalyzes the ATP-dependent biosynthesis of glutamine from glutamate and ammonia. Feedback-inhibited GlnA also interacts with and regulates the activity of the transcriptional regulator TnrA. During nitrogen limitation, TnrA is in its DNA-binding active state and turns on the transcription of genes required for nitrogen assimilation. Under conditions of nitrogen excess, feedback-inhibited GlnA forms a stable complex with TnrA, which inhibits its DNA-binding activity. In contrast, feedback-inhibited GlnA acts as a chaperone to stabilize the DNA-binding activity of GlnR, which represses the transcription of nitrogen assimilation genes. This Staphylococcus epidermidis (strain ATCC 35984 / DSM 28319 / BCRC 17069 / CCUG 31568 / BM 3577 / RP62A) protein is Glutamine synthetase.